Reading from the N-terminus, the 423-residue chain is MSYVIDRRLNGKNKSTVNRQRFLRRYREHIKKAVEEAVSRRSIMDMEHGEQISIPGRDIDEPVLHHGRGGKQTIVHPGNKEFTAGEHIARPQGGGGGGGRGKAGNSGEGMDDFVFQITQEEFLEFMFEDLELPNLVKRHLTGTDTFKTVRAGIANEGNPSRINIVRTLRSAHARRIALTGSSRALLREAQKELERLKVEEPDNFTDIRETEIEIERLKARINRLPFLDTFDLKYNLLIKQPNPSSKAVMFCLMDVSGSMTQATKDIAKRFFILLYLFLKRNYDRIEVVFIRHHTSAREVDEEEFFYSRETGGTIVSSALKMMQEIMADRYPASDWNIYAAQASDGDNWNDDSPICRDILANQIMPHVQYYTYVEITPREHQALWYEYERIGEAYPDTFAQQQLVSAGDIYPVFRELFQRRLAT.

The tract at residues 85–107 (GEHIARPQGGGGGGGRGKAGNSG) is disordered. Positions 92-107 (QGGGGGGGRGKAGNSG) are enriched in gly residues.

This sequence belongs to the UPF0229 family.

The chain is UPF0229 protein PSEEN0423 from Pseudomonas entomophila (strain L48).